Reading from the N-terminus, the 188-residue chain is Casparian strip membrane protein 1 (188 aa).

The Cytoplasmic segment spans residues 1-24; the sequence is MKAGALELGHASKTTKSGVNRGMS. The helical transmembrane segment at 25 to 45 threads the bilayer; that stretch reads ILDLFIRIIAIIATLGSAIAM. Residues 46–72 lie on the Extracellular side of the membrane; it reads GTTNETLPFFTQFVRFKAKYSDLPTFT. Residue asparagine 49 is glycosylated (N-linked (GlcNAc...) asparagine). A helical transmembrane segment spans residues 73 to 93; the sequence is FFVVANAIVSAYLVLSLGLSI. Topologically, residues 94–105 are cytoplasmic; it reads YHIMRSRAQATR. A helical membrane pass occupies residues 106–126; the sequence is IALIFFDAAMLGLLTGGASAS. Topologically, residues 127–159 are extracellular; that stretch reads AAIVYLAHKGNRKTNWFPICQQYDSFCHRTSGS. A helical transmembrane segment spans residues 160 to 180; the sequence is LVGSFAGSVLIILLIFLSAIA. The Cytoplasmic portion of the chain corresponds to 181–188; the sequence is LSRQSLNH.

It belongs to the Casparian strip membrane proteins (CASP) family. Homodimer and heterodimers.

It localises to the cell membrane. Regulates membrane-cell wall junctions and localized cell wall deposition. Required for establishment of the Casparian strip membrane domain (CSD) and the subsequent formation of Casparian strips, a cell wall modification of the root endodermis that determines an apoplastic barrier between the intraorganismal apoplasm and the extraorganismal apoplasm and prevents lateral diffusion. This chain is Casparian strip membrane protein 1, found in Solanum tuberosum (Potato).